Reading from the N-terminus, the 203-residue chain is Holliday junction branch migration complex subunit RuvA (203 aa).

A domain I region spans residues 1–64; that stretch reads MIGRLRGYIL…EDAQLLYGFN (64 aa). Positions 65–142 are domain II; sequence DKQERALFRE…KGLNGDLFNN (78 aa). A flexible linker region spans residues 143–154; the sequence is SSEITLPTAAQA. Positions 155 to 203 are domain III; the sequence is AELDAEAEAASALVALGYKPQEASRMVSKIAKPGADCETLIRDALRAAL.

The protein belongs to the RuvA family. In terms of assembly, homotetramer. Forms an RuvA(8)-RuvB(12)-Holliday junction (HJ) complex. HJ DNA is sandwiched between 2 RuvA tetramers; dsDNA enters through RuvA and exits via RuvB. An RuvB hexamer assembles on each DNA strand where it exits the tetramer. Each RuvB hexamer is contacted by two RuvA subunits (via domain III) on 2 adjacent RuvB subunits; this complex drives branch migration. In the full resolvosome a probable DNA-RuvA(4)-RuvB(12)-RuvC(2) complex forms which resolves the HJ.

The protein localises to the cytoplasm. Its function is as follows. The RuvA-RuvB-RuvC complex processes Holliday junction (HJ) DNA during genetic recombination and DNA repair, while the RuvA-RuvB complex plays an important role in the rescue of blocked DNA replication forks via replication fork reversal (RFR). RuvA specifically binds to HJ cruciform DNA, conferring on it an open structure. The RuvB hexamer acts as an ATP-dependent pump, pulling dsDNA into and through the RuvAB complex. HJ branch migration allows RuvC to scan DNA until it finds its consensus sequence, where it cleaves and resolves the cruciform DNA. In Serratia proteamaculans (strain 568), this protein is Holliday junction branch migration complex subunit RuvA.